Here is a 20-residue protein sequence, read N- to C-terminus: Ribulose bisphosphate carboxylase small subunit (20 aa).

It belongs to the RuBisCO small chain family. As to quaternary structure, heterohexadecamer of 8 large and 8 small subunits.

It is found in the plastid. Its subcellular location is the chloroplast. In terms of biological role, ruBisCO catalyzes two reactions: the carboxylation of D-ribulose 1,5-bisphosphate, the primary event in carbon dioxide fixation, as well as the oxidative fragmentation of the pentose substrate in the photorespiration process. Both reactions occur simultaneously and in competition at the same active site. Although the small subunit is not catalytic it is essential for maximal activity. This is Ribulose bisphosphate carboxylase small subunit from Chattonella marina var. antiqua (Red tide flagellate).